The chain runs to 61 residues: Large ribosomal subunit protein uL30 (61 aa).

Belongs to the universal ribosomal protein uL30 family. As to quaternary structure, part of the 50S ribosomal subunit.

The chain is Large ribosomal subunit protein uL30 from Legionella pneumophila (strain Paris).